The primary structure comprises 184 residues: Calmodulin-related protein (184 aa).

EF-hand domains lie at 8 to 43 (DQIS…LGQN), 44 to 79 (PTEA…KMKD), 81 to 116 (DSEE…LGEK), and 117 to 152 (LTDE…NRRR). Ca(2+) contacts are provided by Asp-21, Asp-23, Asp-25, Cys-27, Glu-32, Asp-57, Asp-59, Asn-61, Thr-63, Glu-68, Asp-94, Asp-96, Asn-98, and Glu-105. An N6,N6,N6-trimethyllysine modification is found at Lys-116. Asp-130, Asp-132, Asp-134, Gln-136, and Glu-141 together coordinate Ca(2+). Residues 156–184 (EESKRSVNSNISRSNNGRKVRKRDRCTIL) are disordered. A compositionally biased stretch (low complexity) spans 161 to 170 (SVNSNISRSN). Basic residues predominate over residues 171–184 (NGRKVRKRDRCTIL).

Belongs to the calmodulin family.

Functionally, calmodulin mediates the control of a large number of enzymes, ion channels and other proteins by Ca(2+). Among the enzymes to be stimulated by the calmodulin-Ca(2+) complex are a number of protein kinases and phosphatases. This Petunia hybrida (Petunia) protein is Calmodulin-related protein (CAM53).